The following is a 225-amino-acid chain: Uracil-DNA glycosylase (225 aa).

Asp-65 (proton acceptor) is an active-site residue.

The protein belongs to the uracil-DNA glycosylase (UDG) superfamily. UNG family.

The protein resides in the cytoplasm. The catalysed reaction is Hydrolyzes single-stranded DNA or mismatched double-stranded DNA and polynucleotides, releasing free uracil.. Functionally, excises uracil residues from the DNA which can arise as a result of misincorporation of dUMP residues by DNA polymerase or due to deamination of cytosine. The chain is Uracil-DNA glycosylase from Clostridium perfringens (strain 13 / Type A).